A 366-amino-acid chain; its full sequence is Ribosomal RNA large subunit methyltransferase M (366 aa).

Residues serine 188, 221–224 (CPGG), aspartate 240, aspartate 260, and aspartate 277 contribute to the S-adenosyl-L-methionine site. Lysine 306 (proton acceptor) is an active-site residue.

The protein belongs to the class I-like SAM-binding methyltransferase superfamily. RNA methyltransferase RlmE family. RlmM subfamily. Monomer.

The protein resides in the cytoplasm. It catalyses the reaction cytidine(2498) in 23S rRNA + S-adenosyl-L-methionine = 2'-O-methylcytidine(2498) in 23S rRNA + S-adenosyl-L-homocysteine + H(+). Its function is as follows. Catalyzes the 2'-O-methylation at nucleotide C2498 in 23S rRNA. The sequence is that of Ribosomal RNA large subunit methyltransferase M from Photorhabdus asymbiotica subsp. asymbiotica (strain ATCC 43949 / 3105-77) (Xenorhabdus luminescens (strain 2)).